Here is a 494-residue protein sequence, read N- to C-terminus: Aspartyl/glutamyl-tRNA(Asn/Gln) amidotransferase subunit B (494 aa).

It belongs to the GatB/GatE family. GatB subfamily. As to quaternary structure, heterotrimer of A, B and C subunits.

The catalysed reaction is L-glutamyl-tRNA(Gln) + L-glutamine + ATP + H2O = L-glutaminyl-tRNA(Gln) + L-glutamate + ADP + phosphate + H(+). The enzyme catalyses L-aspartyl-tRNA(Asn) + L-glutamine + ATP + H2O = L-asparaginyl-tRNA(Asn) + L-glutamate + ADP + phosphate + 2 H(+). Functionally, allows the formation of correctly charged Asn-tRNA(Asn) or Gln-tRNA(Gln) through the transamidation of misacylated Asp-tRNA(Asn) or Glu-tRNA(Gln) in organisms which lack either or both of asparaginyl-tRNA or glutaminyl-tRNA synthetases. The reaction takes place in the presence of glutamine and ATP through an activated phospho-Asp-tRNA(Asn) or phospho-Glu-tRNA(Gln). The chain is Aspartyl/glutamyl-tRNA(Asn/Gln) amidotransferase subunit B from Rhodopseudomonas palustris (strain BisB5).